We begin with the raw amino-acid sequence, 284 residues long: Tropomyosin Tod p 1.0102 (284 aa).

Residues 15-273 are a coiled coil; that stretch reads KEVATDKAEQ…KERYKSISDE (259 aa). The disordered stretch occupies residues 103-136; sequence EERLTSAQSKLEDASKAADESERGRKVLENRSQG.

Belongs to the tropomyosin family. Homodimer. In terms of processing, the N-terminus is blocked. Expressed in mantle muscle (at protein level).

Tropomyosin, in association with the troponin complex, plays a central role in the calcium dependent regulation of muscle contraction. This Todarodes pacificus (Japanese flying squid) protein is Tropomyosin Tod p 1.0102.